We begin with the raw amino-acid sequence, 121 residues long: Ribonuclease P protein component (121 aa).

The protein belongs to the RnpA family. In terms of assembly, consists of a catalytic RNA component (M1 or rnpB) and a protein subunit.

It catalyses the reaction Endonucleolytic cleavage of RNA, removing 5'-extranucleotides from tRNA precursor.. Functionally, RNaseP catalyzes the removal of the 5'-leader sequence from pre-tRNA to produce the mature 5'-terminus. It can also cleave other RNA substrates such as 4.5S RNA. The protein component plays an auxiliary but essential role in vivo by binding to the 5'-leader sequence and broadening the substrate specificity of the ribozyme. In Neisseria gonorrhoeae (strain ATCC 700825 / FA 1090), this protein is Ribonuclease P protein component.